A 493-amino-acid polypeptide reads, in one-letter code: ATP-dependent rRNA helicase RRP3 (493 aa).

Basic and acidic residues-rich tracts occupy residues Ala-26–Glu-42 and Glu-51–Lys-62. A disordered region spans residues Ala-26–Glu-68. The Q motif signature appears at Glu-73–Ala-101. A Helicase ATP-binding domain is found at Ile-104–Cys-276. ATP is bound at residue Ala-117–Thr-124. Positions Asp-223 to Asp-226 match the DEAD box motif. One can recognise a Helicase C-terminal domain in the interval Leu-307–Val-453. The tract at residues Arg-467 to Lys-493 is disordered. A compositionally biased stretch (basic and acidic residues) spans Met-483–Lys-493.

It belongs to the DEAD box helicase family. DDX47/RRP3 subfamily. As to quaternary structure, interacts with the SSU processome.

Its subcellular location is the nucleus. The enzyme catalyses ATP + H2O = ADP + phosphate + H(+). Functionally, ATP-dependent rRNA helicase required for pre-ribosomal RNA processing. Involved in the maturation of the 35S-pre-rRNA and to its cleavage to mature 18S rRNA. This Candida glabrata (strain ATCC 2001 / BCRC 20586 / JCM 3761 / NBRC 0622 / NRRL Y-65 / CBS 138) (Yeast) protein is ATP-dependent rRNA helicase RRP3.